The following is a 188-amino-acid chain: Defensin-like protein 99 (188 aa).

Positions 1-28 are cleaved as a signal peptide; that stretch reads MGSLKLSTVVVTALVVCLSILLISPTEA. 7 disulfides stabilise this stretch: Cys-37–Cys-95, Cys-45–Cys-77, Cys-58–Cys-92, Cys-62–Cys-94, Cys-123–Cys-178, Cys-137–Cys-175, and Cys-141–Cys-177.

This sequence belongs to the DEFL family.

It is found in the secreted. The chain is Defensin-like protein 99 from Arabidopsis thaliana (Mouse-ear cress).